The sequence spans 78 residues: ATP synthase subunit c (78 aa).

The next 2 helical transmembrane spans lie at 16–36 (LATL…ASFL) and 57–77 (MALA…ILFV).

It belongs to the ATPase C chain family. As to quaternary structure, F-type ATPases have 2 components, F(1) - the catalytic core - and F(0) - the membrane proton channel. F(1) has five subunits: alpha(3), beta(3), gamma(1), delta(1), epsilon(1). F(0) has three main subunits: a(1), b(2) and c(10-14). The alpha and beta chains form an alternating ring which encloses part of the gamma chain. F(1) is attached to F(0) by a central stalk formed by the gamma and epsilon chains, while a peripheral stalk is formed by the delta and b chains.

It is found in the cell inner membrane. F(1)F(0) ATP synthase produces ATP from ADP in the presence of a proton or sodium gradient. F-type ATPases consist of two structural domains, F(1) containing the extramembraneous catalytic core and F(0) containing the membrane proton channel, linked together by a central stalk and a peripheral stalk. During catalysis, ATP synthesis in the catalytic domain of F(1) is coupled via a rotary mechanism of the central stalk subunits to proton translocation. Its function is as follows. Key component of the F(0) channel; it plays a direct role in translocation across the membrane. A homomeric c-ring of between 10-14 subunits forms the central stalk rotor element with the F(1) delta and epsilon subunits. This is ATP synthase subunit c from Hyphomonas neptunium (strain ATCC 15444).